The chain runs to 319 residues: Taste receptor type 2 member 39 (319 aa).

Residues methionine 1–serine 16 lie on the Extracellular side of the membrane. Residues isoleucine 17–isoleucine 37 form a helical membrane-spanning segment. The Cytoplasmic portion of the chain corresponds to threonine 38–arginine 56. A helical transmembrane segment spans residues isoleucine 57–threonine 77. Over serine 78–serine 97 the chain is Extracellular. Asparagine 82 is a glycosylation site (N-linked (GlcNAc...) asparagine). A helical membrane pass occupies residues phenylalanine 98–valine 118. The Cytoplasmic portion of the chain corresponds to lysine 119–glutamate 137. A helical transmembrane segment spans residues leucine 138–cysteine 158. Topologically, residues asparagine 159–asparagine 187 are extracellular. N-linked (GlcNAc...) asparagine glycosylation is found at asparagine 167 and asparagine 176. Residues valine 188 to alanine 208 traverse the membrane as a helical segment. Residues threonine 209–serine 247 lie on the Cytoplasmic side of the membrane. The chain crosses the membrane as a helical span at residues cysteine 248–alanine 268. At aspartate 269–phenylalanine 273 the chain is on the extracellular side. The helical transmembrane segment at tryptophan 274–isoleucine 294 threads the bilayer. Topologically, residues glutamine 295–tyrosine 319 are cytoplasmic.

It belongs to the G-protein coupled receptor T2R family.

Its subcellular location is the membrane. In terms of biological role, putative taste receptor which may play a role in the perception of bitterness. The sequence is that of Taste receptor type 2 member 39 from Rattus norvegicus (Rat).